The following is a 313-amino-acid chain: MRQTNVALLYEAQRERLALTHVSGQLDRTISVTEDRIWPADLIGHLNLIHPARLQILGAAELSWAQRQSREKIGHHLTEIINARPPAIIVADRCQPPPILCTICENADIALFTTPHPAASVIDQLRLYLSRELSEKISLHGVFMDVLGLGVFITGNSGAGKSELALELISRGHGLVADDIVEFSRIAPTVLEGRCPAMLKDFIEVRGLGILNIRTIFGETACRRKMRLRLVVHLERRLPGQTDPSRLPMHRETQEVLGVPVLRAILPVAAGRNIAVLLEAAVRSTILQLRGIDSTQEFIDRQQRMLEGEPGPD.

Catalysis depends on residues His140 and Lys161. Residue 155 to 162 (GNSGAGKS) participates in ATP binding. Ser162 serves as a coordination point for Mg(2+). Asp179 acts as the Proton acceptor; for phosphorylation activity. Proton donor; for dephosphorylation activity in catalysis. An important for the catalytic mechanism of both phosphorylation and dephosphorylation region spans residues 203 to 212 (IEVRGLGILN). Glu204 serves as a coordination point for Mg(2+). The active site involves Arg246. The segment at 267–272 (PVAAGR) is important for the catalytic mechanism of dephosphorylation.

It belongs to the HPrK/P family. Homohexamer. It depends on Mg(2+) as a cofactor.

The catalysed reaction is [HPr protein]-L-serine + ATP = [HPr protein]-O-phospho-L-serine + ADP + H(+). It catalyses the reaction [HPr protein]-O-phospho-L-serine + phosphate + H(+) = [HPr protein]-L-serine + diphosphate. In terms of biological role, catalyzes the ATP- as well as the pyrophosphate-dependent phosphorylation of a specific serine residue in HPr, a phosphocarrier protein of the phosphoenolpyruvate-dependent sugar phosphotransferase system (PTS). HprK/P also catalyzes the pyrophosphate-producing, inorganic phosphate-dependent dephosphorylation (phosphorolysis) of seryl-phosphorylated HPr (P-Ser-HPr). This chain is HPr kinase/phosphorylase, found in Aromatoleum aromaticum (strain DSM 19018 / LMG 30748 / EbN1) (Azoarcus sp. (strain EbN1)).